Consider the following 179-residue polypeptide: Proteasome chaperone 3 (179 aa).

Belongs to the PSMG3 family. In terms of assembly, component of the 20S proteasome chaperone. Forms a heterodimer with POC4 that binds to proteasome precursors. Interacts with POP2.

In terms of biological role, involved in 20S proteasome assembly, facilitating the alpha-ring formation. The protein is Proteasome chaperone 3 (IRC25) of Saccharomyces cerevisiae (strain ATCC 204508 / S288c) (Baker's yeast).